A 248-amino-acid chain; its full sequence is UDP-2,3-diacylglucosamine hydrolase (248 aa).

Residues Asp7, His9, Asp40, Asn78, and His113 each coordinate Mn(2+). 78 to 79 (NR) provides a ligand contact to substrate. The substrate site is built by Asp121, Ser159, Thr163, Lys166, and His194. Residues His194 and His196 each coordinate Mn(2+).

It belongs to the LpxH family. Requires Mn(2+) as cofactor.

Its subcellular location is the cell inner membrane. The catalysed reaction is UDP-2-N,3-O-bis[(3R)-3-hydroxytetradecanoyl]-alpha-D-glucosamine + H2O = 2-N,3-O-bis[(3R)-3-hydroxytetradecanoyl]-alpha-D-glucosaminyl 1-phosphate + UMP + 2 H(+). The protein operates within glycolipid biosynthesis; lipid IV(A) biosynthesis; lipid IV(A) from (3R)-3-hydroxytetradecanoyl-[acyl-carrier-protein] and UDP-N-acetyl-alpha-D-glucosamine: step 4/6. Hydrolyzes the pyrophosphate bond of UDP-2,3-diacylglucosamine to yield 2,3-diacylglucosamine 1-phosphate (lipid X) and UMP by catalyzing the attack of water at the alpha-P atom. Involved in the biosynthesis of lipid A, a phosphorylated glycolipid that anchors the lipopolysaccharide to the outer membrane of the cell. In Pseudomonas syringae pv. tomato (strain ATCC BAA-871 / DC3000), this protein is UDP-2,3-diacylglucosamine hydrolase.